The sequence spans 181 residues: RING-H2 finger protein ATL56 (181 aa).

The segment at 1-24 (MPPTNNYRISGEPPSTTPSHPPPK) is disordered. Over residues 15–24 (STTPSHPPPK) the composition is skewed to pro residues. The chain crosses the membrane as a helical span at residues 32–52 (LFLVGVIMFSIFFLFLVLIGI). The RING-type; atypical zinc finger occupies 110–152 (CVVCFDGFRQGQWCRNLPGCGHVFHRKCVDTWLLKASTCPICR).

This sequence belongs to the RING-type zinc finger family. ATL subfamily.

The protein resides in the membrane. It catalyses the reaction S-ubiquitinyl-[E2 ubiquitin-conjugating enzyme]-L-cysteine + [acceptor protein]-L-lysine = [E2 ubiquitin-conjugating enzyme]-L-cysteine + N(6)-ubiquitinyl-[acceptor protein]-L-lysine.. It participates in protein modification; protein ubiquitination. The polypeptide is RING-H2 finger protein ATL56 (ATL56) (Arabidopsis thaliana (Mouse-ear cress)).